Reading from the N-terminus, the 430-residue chain is 2-deoxy-scyllo-inosose synthase (430 aa).

NAD(+) is bound by residues aspartate 42, 73–76 (EVHK), 105–109 (GVTGN), 129–130 (TT), 140–142 (SLK), and 151–152 (KN). The active site involves lysine 142. Glutamate 184 contacts Co(2+). Glutamate 244 is a catalytic residue. 2 residues coordinate Co(2+): histidine 247 and histidine 263. The tract at residues 371 to 430 (RGGAGGGAAEPAAARTGPVPDGPEAAVPATPGPVPAGPAAAAPLPSGPAPTAPAAAGPVP) is disordered. Positions 379–399 (AEPAAARTGPVPDGPEAAVPA) are enriched in low complexity.

This sequence belongs to the sugar phosphate cyclases superfamily. DOI synthase family. NAD(+) is required as a cofactor. Co(2+) serves as cofactor.

It catalyses the reaction D-glucose 6-phosphate = 2-deoxy-L-scyllo-inosose + phosphate. It participates in metabolic intermediate biosynthesis; 2-deoxystreptamine biosynthesis; 2-deoxystreptamine from D-glucose 6-phosphate: step 1/4. It functions in the pathway antibiotic biosynthesis; neomycin biosynthesis. Its function is as follows. Catalyzes the intramolecular carbocycle formation from D-glucose-6-phosphate to 2-deoxy-scyllo-inosose (DOI). In Streptomyces fradiae (Streptomyces roseoflavus), this protein is 2-deoxy-scyllo-inosose synthase (neoC).